Consider the following 59-residue polypeptide: Large ribosomal subunit protein bL32c (59 aa).

A disordered region spans residues 1 to 20 (MAVPKKRTSKSKKRIRKSVW).

Belongs to the bacterial ribosomal protein bL32 family.

The protein resides in the plastid. Its subcellular location is the chloroplast. This chain is Large ribosomal subunit protein bL32c, found in Angiopteris evecta (Mule's foot fern).